The sequence spans 303 residues: Aspartate carbamoyltransferase catalytic subunit (303 aa).

Carbamoyl phosphate-binding residues include arginine 54 and threonine 55. L-aspartate is bound at residue lysine 83. Residues arginine 104, histidine 132, and glutamine 135 each coordinate carbamoyl phosphate. L-aspartate contacts are provided by arginine 164 and arginine 226. Positions 265 and 266 each coordinate carbamoyl phosphate.

Belongs to the aspartate/ornithine carbamoyltransferase superfamily. ATCase family. In terms of assembly, heterooligomer of catalytic and regulatory chains.

It carries out the reaction carbamoyl phosphate + L-aspartate = N-carbamoyl-L-aspartate + phosphate + H(+). It functions in the pathway pyrimidine metabolism; UMP biosynthesis via de novo pathway; (S)-dihydroorotate from bicarbonate: step 2/3. In terms of biological role, catalyzes the condensation of carbamoyl phosphate and aspartate to form carbamoyl aspartate and inorganic phosphate, the committed step in the de novo pyrimidine nucleotide biosynthesis pathway. In Methanocorpusculum labreanum (strain ATCC 43576 / DSM 4855 / Z), this protein is Aspartate carbamoyltransferase catalytic subunit.